The following is a 379-amino-acid chain: L-lactate dehydrogenase (379 aa).

Residues 1–379 (MIISSSTDYR…ITSELLVREP (379 aa)) form the FMN hydroxy acid dehydrogenase domain. Y24 provides a ligand contact to substrate. FMN contacts are provided by S106 and Q127. A substrate-binding site is contributed by Y129. T155 provides a ligand contact to FMN. R164 is a binding site for substrate. K251 is a binding site for FMN. The Proton acceptor role is filled by H275. Residue R278 participates in substrate binding. 306 to 330 (DSGIRSGLDVVRMIALGADAAMLGR) is a binding site for FMN.

The protein belongs to the FMN-dependent alpha-hydroxy acid dehydrogenase family. FMN is required as a cofactor.

The protein localises to the cell membrane. The catalysed reaction is (S)-lactate + A = pyruvate + AH2. Functionally, catalyzes the conversion of L-lactate to pyruvate. Is coupled to the respiratory chain. The polypeptide is L-lactate dehydrogenase (Alcaligenes faecalis).